We begin with the raw amino-acid sequence, 156 residues long: Small ribosomal subunit protein uS7 (156 aa).

The protein belongs to the universal ribosomal protein uS7 family. Part of the 30S ribosomal subunit. Contacts proteins S9 and S11.

One of the primary rRNA binding proteins, it binds directly to 16S rRNA where it nucleates assembly of the head domain of the 30S subunit. Is located at the subunit interface close to the decoding center, probably blocks exit of the E-site tRNA. This Maricaulis maris (strain MCS10) (Caulobacter maris) protein is Small ribosomal subunit protein uS7.